The sequence spans 436 residues: tRNA-2-methylthio-N(6)-dimethylallyladenosine synthase (436 aa).

The MTTase N-terminal domain occupies 5–121; sequence RKLFIKTYGC…LPDMLERTEG (117 aa). Cys-14, Cys-50, Cys-84, Cys-158, Cys-162, and Cys-165 together coordinate [4Fe-4S] cluster. Positions 144 to 373 constitute a Radical SAM core domain; it reads ALRGPTAFLT…LGEQQRAAQA (230 aa). One can recognise a TRAM domain in the interval 373–435; it reads AAMVGRELGV…PNSLAGERIG (63 aa).

This sequence belongs to the methylthiotransferase family. MiaB subfamily. As to quaternary structure, monomer. Requires [4Fe-4S] cluster as cofactor.

The protein localises to the cytoplasm. It carries out the reaction N(6)-dimethylallyladenosine(37) in tRNA + (sulfur carrier)-SH + AH2 + 2 S-adenosyl-L-methionine = 2-methylsulfanyl-N(6)-dimethylallyladenosine(37) in tRNA + (sulfur carrier)-H + 5'-deoxyadenosine + L-methionine + A + S-adenosyl-L-homocysteine + 2 H(+). Catalyzes the methylthiolation of N6-(dimethylallyl)adenosine (i(6)A), leading to the formation of 2-methylthio-N6-(dimethylallyl)adenosine (ms(2)i(6)A) at position 37 in tRNAs that read codons beginning with uridine. The sequence is that of tRNA-2-methylthio-N(6)-dimethylallyladenosine synthase from Cereibacter sphaeroides (strain ATCC 17025 / ATH 2.4.3) (Rhodobacter sphaeroides).